Consider the following 307-residue polypeptide: Homoserine O-acetyltransferase (307 aa).

The active-site Acyl-thioester intermediate is Cys142. Substrate contacts are provided by Lys163 and Ser192. His235 functions as the Proton acceptor in the catalytic mechanism. Glu237 is a catalytic residue. Arg249 is a binding site for substrate.

Belongs to the MetA family.

It is found in the cytoplasm. It catalyses the reaction L-homoserine + acetyl-CoA = O-acetyl-L-homoserine + CoA. The protein operates within amino-acid biosynthesis; L-methionine biosynthesis via de novo pathway; O-acetyl-L-homoserine from L-homoserine: step 1/1. Its function is as follows. Transfers an acetyl group from acetyl-CoA to L-homoserine, forming acetyl-L-homoserine. The protein is Homoserine O-acetyltransferase of Rhizobium johnstonii (strain DSM 114642 / LMG 32736 / 3841) (Rhizobium leguminosarum bv. viciae).